The primary structure comprises 401 residues: Coenzyme A biosynthesis bifunctional protein CoaBC (401 aa).

A phosphopantothenoylcysteine decarboxylase region spans residues 1 to 190 (MQTLAGKKIL…FQPKPLQDKS (190 aa)). The active-site Proton donor is Cys-159. The phosphopantothenate--cysteine ligase stretch occupies residues 191–401 (ILITAGPTRE…LKQIQTLMGH (211 aa)). Residues Asp-279, Lys-289, 307–310 (PDIV), Phe-326, Lys-340, and Lys-344 each bind CTP.

The protein in the N-terminal section; belongs to the HFCD (homo-oligomeric flavin containing Cys decarboxylase) superfamily. In the C-terminal section; belongs to the PPC synthetase family. Requires Mg(2+) as cofactor. The cofactor is FMN.

It catalyses the reaction N-[(R)-4-phosphopantothenoyl]-L-cysteine + H(+) = (R)-4'-phosphopantetheine + CO2. The catalysed reaction is (R)-4'-phosphopantothenate + L-cysteine + CTP = N-[(R)-4-phosphopantothenoyl]-L-cysteine + CMP + diphosphate + H(+). It functions in the pathway cofactor biosynthesis; coenzyme A biosynthesis; CoA from (R)-pantothenate: step 2/5. The protein operates within cofactor biosynthesis; coenzyme A biosynthesis; CoA from (R)-pantothenate: step 3/5. Its function is as follows. Catalyzes two sequential steps in the biosynthesis of coenzyme A. In the first step cysteine is conjugated to 4'-phosphopantothenate to form 4-phosphopantothenoylcysteine. In the second step the latter compound is decarboxylated to form 4'-phosphopantotheine. The chain is Coenzyme A biosynthesis bifunctional protein CoaBC from Vibrio vulnificus (strain CMCP6).